A 206-amino-acid chain; its full sequence is Pyridoxine/pyridoxamine 5'-phosphate oxidase (206 aa).

FMN-binding positions include 53–58 (RMVLLK), 68–69 (YT), K75, and Q97. K58 lines the substrate pocket. Positions 115, 119, and 123 each coordinate substrate. FMN contacts are provided by residues 132-133 (QS) and W177. 183 to 185 (RLH) contributes to the substrate binding site. Residue R187 participates in FMN binding.

Belongs to the pyridoxamine 5'-phosphate oxidase family. As to quaternary structure, homodimer. Requires FMN as cofactor.

It carries out the reaction pyridoxamine 5'-phosphate + O2 + H2O = pyridoxal 5'-phosphate + H2O2 + NH4(+). The enzyme catalyses pyridoxine 5'-phosphate + O2 = pyridoxal 5'-phosphate + H2O2. It functions in the pathway cofactor metabolism; pyridoxal 5'-phosphate salvage; pyridoxal 5'-phosphate from pyridoxamine 5'-phosphate: step 1/1. The protein operates within cofactor metabolism; pyridoxal 5'-phosphate salvage; pyridoxal 5'-phosphate from pyridoxine 5'-phosphate: step 1/1. In terms of biological role, catalyzes the oxidation of either pyridoxine 5'-phosphate (PNP) or pyridoxamine 5'-phosphate (PMP) into pyridoxal 5'-phosphate (PLP). This is Pyridoxine/pyridoxamine 5'-phosphate oxidase from Rhizobium leguminosarum bv. trifolii (strain WSM2304).